The sequence spans 308 residues: Cytochrome b (308 aa).

The next 4 helical transmembrane spans lie at 1-21 (FGSL…LLAT), 45-66 (WLIR…YLHI), 81-101 (WNTG…GYVL), and 146-166 (FFAL…VHLT). Residues histidine 51 and histidine 65 each contribute to the heme b site. Heme b-binding residues include histidine 150 and histidine 164. Histidine 169 provides a ligand contact to a ubiquinone. 3 consecutive transmembrane segments (helical) span residues 194 to 214 (MKDI…ALFS), 256 to 276 (LGGV…PLLH), and 288 to 308 (LSQI…WVGS).

The protein belongs to the cytochrome b family. As to quaternary structure, the cytochrome bc1 complex contains 11 subunits: 3 respiratory subunits (MT-CYB, CYC1 and UQCRFS1), 2 core proteins (UQCRC1 and UQCRC2) and 6 low-molecular weight proteins (UQCRH/QCR6, UQCRB/QCR7, UQCRQ/QCR8, UQCR10/QCR9, UQCR11/QCR10 and a cleavage product of UQCRFS1). This cytochrome bc1 complex then forms a dimer. It depends on heme b as a cofactor.

The protein resides in the mitochondrion inner membrane. In terms of biological role, component of the ubiquinol-cytochrome c reductase complex (complex III or cytochrome b-c1 complex) that is part of the mitochondrial respiratory chain. The b-c1 complex mediates electron transfer from ubiquinol to cytochrome c. Contributes to the generation of a proton gradient across the mitochondrial membrane that is then used for ATP synthesis. The protein is Cytochrome b (MT-CYB) of Amblyornis macgregoriae (Macgregor's bowerbird).